A 268-amino-acid polypeptide reads, in one-letter code: Oxygen-evolving enhancer protein 2-1, chloroplastic (268 aa).

Residues 1–82 constitute a chloroplast transit peptide; the sequence is MASTQCFLHQ…IGSKVSPADA (82 aa).

This sequence belongs to the PsbP family.

Its subcellular location is the plastid. It localises to the chloroplast thylakoid membrane. May be involved in the regulation of photosystem II. The sequence is that of Oxygen-evolving enhancer protein 2-1, chloroplastic (PSBP1) from Nicotiana tabacum (Common tobacco).